Consider the following 100-residue polypeptide: NADH-quinone oxidoreductase subunit K (100 aa).

3 helical membrane-spanning segments follow: residues 4–24 (YEYY…GIII), 29–49 (IAML…FVAF), and 60–80 (VFVF…LGLI).

It belongs to the complex I subunit 4L family. As to quaternary structure, NDH-1 is composed of 14 different subunits. Subunits NuoA, H, J, K, L, M, N constitute the membrane sector of the complex.

The protein resides in the cell inner membrane. The enzyme catalyses a quinone + NADH + 5 H(+)(in) = a quinol + NAD(+) + 4 H(+)(out). In terms of biological role, NDH-1 shuttles electrons from NADH, via FMN and iron-sulfur (Fe-S) centers, to quinones in the respiratory chain. The immediate electron acceptor for the enzyme in this species is believed to be ubiquinone. Couples the redox reaction to proton translocation (for every two electrons transferred, four hydrogen ions are translocated across the cytoplasmic membrane), and thus conserves the redox energy in a proton gradient. This Persephonella marina (strain DSM 14350 / EX-H1) protein is NADH-quinone oxidoreductase subunit K.